We begin with the raw amino-acid sequence, 151 residues long: Ribosome maturation factor RimP (151 aa).

It belongs to the RimP family.

It is found in the cytoplasm. Its function is as follows. Required for maturation of 30S ribosomal subunits. In Shewanella halifaxensis (strain HAW-EB4), this protein is Ribosome maturation factor RimP.